Here is a 351-residue protein sequence, read N- to C-terminus: Mitochondrial mRNA pseudouridine synthase RPUSD3 (351 aa).

A mitochondrion-targeting transit peptide spans 1-25; sequence MRAVLAREMDGRRVLGRFWSGWRRG. Residues 33 to 58 form a disordered region; the sequence is EDAGFGTEARHQRQPRGSCQRSGPLG. The residue at position 71 (Ser-71) is a Phosphoserine.

The protein belongs to the pseudouridine synthase RluA family. Forms a regulatory protein-RNA complex, consisting of RCC1L, NGRN, RPUSD3, RPUSD4, TRUB2, FASTKD2 and 16S mt-rRNA.

The protein resides in the mitochondrion matrix. The enzyme catalyses a uridine in mRNA = a pseudouridine in mRNA. Catalyzes uridine to pseudouridine isomerization (pseudouridylation) of specific mitochondrial mRNAs (mt-mRNAs), a post-transcriptional modification necessary for their translation. Acts at position 390 in COXI mt-mRNA and at position 697-699 in mitochondrial COXIII mt-mRNA. As a component of a functional protein-RNA module, consisting of RCC1L, NGRN, RPUSD3, RPUSD4, TRUB2, FASTKD2 and 16S mitochondrial ribosomal RNA (16S mt-rRNA), controls 16S mt-rRNA abundance and may play a role in mitochondrial ribosome biogenesis. The protein is Mitochondrial mRNA pseudouridine synthase RPUSD3 of Homo sapiens (Human).